The sequence spans 330 residues: Aspartate--ammonia ligase (330 aa).

This sequence belongs to the class-II aminoacyl-tRNA synthetase family. AsnA subfamily.

The protein resides in the cytoplasm. It catalyses the reaction L-aspartate + NH4(+) + ATP = L-asparagine + AMP + diphosphate + H(+). Its pathway is amino-acid biosynthesis; L-asparagine biosynthesis; L-asparagine from L-aspartate (ammonia route): step 1/1. This chain is Aspartate--ammonia ligase, found in Escherichia coli O17:K52:H18 (strain UMN026 / ExPEC).